Here is a 425-residue protein sequence, read N- to C-terminus: Glutamate-1-semialdehyde 2,1-aminomutase (425 aa).

K266 carries the post-translational modification N6-(pyridoxal phosphate)lysine.

The protein belongs to the class-III pyridoxal-phosphate-dependent aminotransferase family. HemL subfamily. As to quaternary structure, homodimer. It depends on pyridoxal 5'-phosphate as a cofactor.

The protein localises to the cytoplasm. The catalysed reaction is (S)-4-amino-5-oxopentanoate = 5-aminolevulinate. It functions in the pathway porphyrin-containing compound metabolism; protoporphyrin-IX biosynthesis; 5-aminolevulinate from L-glutamyl-tRNA(Glu): step 2/2. In Nitratidesulfovibrio vulgaris (strain DSM 19637 / Miyazaki F) (Desulfovibrio vulgaris), this protein is Glutamate-1-semialdehyde 2,1-aminomutase.